We begin with the raw amino-acid sequence, 101 residues long: Small ribosomal subunit protein uS14A (101 aa).

Residues 31-73 are disordered; it reads IKSPSTTPEARVAAQSELNRQPRDASPVRVRNRDSVDGRPRGH. Over residues 61 to 70 the composition is skewed to basic and acidic residues; the sequence is RNRDSVDGRP.

It belongs to the universal ribosomal protein uS14 family. In terms of assembly, part of the 30S ribosomal subunit. Contacts proteins S3 and S10.

Its function is as follows. Binds 16S rRNA, required for the assembly of 30S particles and may also be responsible for determining the conformation of the 16S rRNA at the A site. This Mycolicibacterium vanbaalenii (strain DSM 7251 / JCM 13017 / BCRC 16820 / KCTC 9966 / NRRL B-24157 / PYR-1) (Mycobacterium vanbaalenii) protein is Small ribosomal subunit protein uS14A.